We begin with the raw amino-acid sequence, 425 residues long: CinA-like protein (425 aa).

The protein belongs to the CinA family.

The polypeptide is CinA-like protein (Shewanella sp. (strain MR-4)).